Here is a 208-residue protein sequence, read N- to C-terminus: Protein-L-isoaspartate O-methyltransferase (208 aa).

Residue Ser59 is part of the active site.

It belongs to the methyltransferase superfamily. L-isoaspartyl/D-aspartyl protein methyltransferase family.

The protein resides in the cytoplasm. It catalyses the reaction [protein]-L-isoaspartate + S-adenosyl-L-methionine = [protein]-L-isoaspartate alpha-methyl ester + S-adenosyl-L-homocysteine. Catalyzes the methyl esterification of L-isoaspartyl residues in peptides and proteins that result from spontaneous decomposition of normal L-aspartyl and L-asparaginyl residues. It plays a role in the repair and/or degradation of damaged proteins. This chain is Protein-L-isoaspartate O-methyltransferase, found in Salmonella newport (strain SL254).